Here is a 675-residue protein sequence, read N- to C-terminus: Sodium/myo-inositol cotransporter 2 (675 aa).

Topologically, residues 1-27 (MESGTSSPQPPQLDPLDAFPQKGLEPG) are extracellular. A helical membrane pass occupies residues 28-48 (DIAVLVLYFLFVLAVGLWSTV). The Cytoplasmic portion of the chain corresponds to 49–65 (KTKRDTVKGYFLAGGDM). Residues 66-88 (VWWPVGASLFASNVGSGHFIGLA) traverse the membrane as a helical segment. Topologically, residues 89-102 (GSGAATGISVSAYE) are extracellular. The chain crosses the membrane as a helical span at residues 103–123 (LNGLFSVLMLAWIFLPIYIAG). The Cytoplasmic portion of the chain corresponds to 124–135 (QVTTMPEYLRKR). A helical transmembrane segment spans residues 136 to 156 (FGGIRIPIILAVLYLFIYIFT). Residues 157 to 180 (KISVDMYAGAIFIQQSLHLDLYLA) are Extracellular-facing. Residues 181 to 201 (IVGLLAITAVYTVAGGLAAVI) traverse the membrane as a helical segment. Over 202 to 208 (YTDALQT) the chain is Cytoplasmic. Residues 209 to 229 (LIMLIGALTLMGYSFAAVGGM) traverse the membrane as a helical segment. Residues 230 to 272 (EGLKEKYFLALASNRSENSSCGLPREDAFHIFRDPLTSDLPWP) are Extracellular-facing. The chain crosses the membrane as a helical span at residues 273–293 (GVLFGMSIPSLWYWCTDQVIV). Topologically, residues 294-308 (QRTLAAKNLSHAKGG) are cytoplasmic. A helical transmembrane segment spans residues 309–329 (ALMAAYLKVLPLFIMVFPGMV). Topologically, residues 330 to 375 (SRILFPDQVACADPEICQKICSNPSGCSDIAYPKLVLELLPTGLRG) are extracellular. The helical transmembrane segment at 376–396 (LMMAVMVAALMSSLTSIFNSA) threads the bilayer. The Cytoplasmic segment spans residues 397 to 418 (STIFTMDLWNHLRPRASEKELM). The chain crosses the membrane as a helical span at residues 419–439 (IVGRVFVLLLVLVSILWIPVV). At 440–446 (QASQGGQ) the chain is on the extracellular side. Residues 447–467 (LFIYIQSISSYLQPPVAVVFI) traverse the membrane as a helical segment. Over 468–479 (MGCFWKRTNEKG) the chain is Cytoplasmic. The helical transmembrane segment at 480 to 500 (AFWGLISGLLLGLVRLVLDFI) threads the bilayer. Residues 501 to 521 (YVQPRCDQPDERPVLVKSIHY) are Extracellular-facing. Residues 522-542 (LYFSMILSTVTLITVSTVSWF) traverse the membrane as a helical segment. Residues 543-654 (TEPPSKEMVS…SLEENPLVKT (112 aa)) are Cytoplasmic-facing. Residues 655-675 (LLDVNLIFCVSCAIFIWGYFA) traverse the membrane as a helical segment.

Belongs to the sodium:solute symporter (SSF) (TC 2.A.21) family. As to expression, highest expression in heart, skeletal muscle, kidney, liver and placenta. Weaker expression in brain, colon, spleen, lung and peripheral blood leukocytes.

It localises to the membrane. The protein localises to the apical cell membrane. It catalyses the reaction myo-inositol(out) + 2 Na(+)(out) = myo-inositol(in) + 2 Na(+)(in). The enzyme catalyses 1D-chiro-inositol(out) + 2 Na(+)(out) = 1D-chiro-inositol(in) + 2 Na(+)(in). It carries out the reaction D-glucose(out) + 2 Na(+)(out) = D-glucose(in) + 2 Na(+)(in). The catalysed reaction is D-xylose(out) + 2 Na(+)(out) = D-xylose(in) + 2 Na(+)(in). MI transport activity inhibited by D-chiro-inositol (DCI), phlorizin (Pz) and sodium (Na(+)). Insulin increases D-chiro-inositol uptake. Its function is as follows. Involved in the sodium-dependent cotransport of myo-inositol (MI) with a Na(+):MI stoichiometry of 2:1. Exclusively responsible for apical MI transport and absorption in intestine. Can also transport D-chiro-inositol (DCI) but not L-fucose. Exhibits stereospecific cotransport of both D-glucose and D-xylose. May induce apoptosis through the TNF-alpha, PDCD1 pathway. May play a role in the regulation of MI concentration in serum, involving reabsorption in at least the proximal tubule of the kidney. The polypeptide is Sodium/myo-inositol cotransporter 2 (Homo sapiens (Human)).